The chain runs to 47 residues: Variabilin (47 aa).

The short motif at R32–D34 is the Cell attachment site element.

Contains 2 disulfide bonds. In terms of tissue distribution, expressed in salivary glands.

It is found in the secreted. In terms of biological role, potently inhibits platelet aggregation induced by ADP (IC(50)=157 nM, complete inhibition at 514 nM). Also inhibits platelet aggregation induced by collagen and by the thrombin receptor peptide SFLLRNP. Is a potent antagonist of the fibrinogen receptor glycoprotein IIb-IIIa (ITGA2B/ITGB3) and the vitronectin receptor alpha-v/beta-3 (ITGAV/ITGB3). The polypeptide is Variabilin (Dermacentor variabilis (American dog tick)).